Reading from the N-terminus, the 249-residue chain is Probable transcriptional regulatory protein Psyc_0938 (249 aa).

The protein belongs to the TACO1 family.

It localises to the cytoplasm. The protein is Probable transcriptional regulatory protein Psyc_0938 of Psychrobacter arcticus (strain DSM 17307 / VKM B-2377 / 273-4).